Reading from the N-terminus, the 296-residue chain is Lipoyl synthase (296 aa).

7 residues coordinate [4Fe-4S] cluster: C37, C42, C48, C63, C67, C70, and S276. Residues 49–265 enclose the Radical SAM core domain; that stretch reads WSKKHTTVMI…ERVAKTKGFL (217 aa).

This sequence belongs to the radical SAM superfamily. Lipoyl synthase family. The cofactor is [4Fe-4S] cluster.

The protein localises to the cytoplasm. The catalysed reaction is [[Fe-S] cluster scaffold protein carrying a second [4Fe-4S](2+) cluster] + N(6)-octanoyl-L-lysyl-[protein] + 2 oxidized [2Fe-2S]-[ferredoxin] + 2 S-adenosyl-L-methionine + 4 H(+) = [[Fe-S] cluster scaffold protein] + N(6)-[(R)-dihydrolipoyl]-L-lysyl-[protein] + 4 Fe(3+) + 2 hydrogen sulfide + 2 5'-deoxyadenosine + 2 L-methionine + 2 reduced [2Fe-2S]-[ferredoxin]. It functions in the pathway protein modification; protein lipoylation via endogenous pathway; protein N(6)-(lipoyl)lysine from octanoyl-[acyl-carrier-protein]: step 2/2. In terms of biological role, catalyzes the radical-mediated insertion of two sulfur atoms into the C-6 and C-8 positions of the octanoyl moiety bound to the lipoyl domains of lipoate-dependent enzymes, thereby converting the octanoylated domains into lipoylated derivatives. This Rickettsia conorii (strain ATCC VR-613 / Malish 7) protein is Lipoyl synthase.